A 449-amino-acid chain; its full sequence is 3-phosphoshikimate 1-carboxyvinyltransferase (449 aa).

Positions 1–29 (MSHDSVPSPITARAGTPLRGRLRPPGDKS) are disordered. Positions 28, 29, and 33 each coordinate 3-phosphoshikimate. Lys-28 provides a ligand contact to phosphoenolpyruvate. Phosphoenolpyruvate is bound by residues Gly-101 and Arg-129. 3-phosphoshikimate contacts are provided by Ser-175, Gln-177, Asp-330, and Lys-357. Phosphoenolpyruvate is bound at residue Gln-177. The Proton acceptor role is filled by Asp-330. Positions 361 and 405 each coordinate phosphoenolpyruvate.

Belongs to the EPSP synthase family. In terms of assembly, monomer.

Its subcellular location is the cytoplasm. It catalyses the reaction 3-phosphoshikimate + phosphoenolpyruvate = 5-O-(1-carboxyvinyl)-3-phosphoshikimate + phosphate. Its pathway is metabolic intermediate biosynthesis; chorismate biosynthesis; chorismate from D-erythrose 4-phosphate and phosphoenolpyruvate: step 6/7. In terms of biological role, catalyzes the transfer of the enolpyruvyl moiety of phosphoenolpyruvate (PEP) to the 5-hydroxyl of shikimate-3-phosphate (S3P) to produce enolpyruvyl shikimate-3-phosphate and inorganic phosphate. The protein is 3-phosphoshikimate 1-carboxyvinyltransferase of Methylobacterium sp. (strain 4-46).